The primary structure comprises 613 residues: Histone acetyltransferase KAT7 (613 aa).

Positions 1–175 are disordered; that stretch reads MAIGVVKRNA…SDLSHRPKRR (175 aa). Phosphoserine occurs at positions 12, 52, 55, 59, and 66. Positions 44 to 59 are enriched in low complexity; that stretch reads VTRSSARLSQSSQDSS. Phosphothreonine occurs at positions 87 and 90. The span at 98–107 shows a compositional bias: polar residues; that stretch reads QTRSSGSETE. The residue at position 104 (S104) is a Phosphoserine. Phosphothreonine is present on T106. The segment covering 112-127 has biased composition (basic and acidic residues); sequence FSDRETKNTADHDESP. Phosphoserine is present on residues S113 and S126. The residue at position 130 (T130) is a Phosphothreonine. The segment covering 136 to 147 has biased composition (low complexity); it reads PSSESDIDISSP. A compositionally biased stretch (basic and acidic residues) spans 150-170; it reads SHDESIAKDMSLKDSGSDLSH. Residues S160, S164, S166, and S180 each carry the phosphoserine modification. Residues 178-221 form a CCHHC-type zinc finger; that stretch reads HESYNFNMKCPTPGCNSLGHLTGKHERHFSISGCPLYHNLSADE. N6-acetyllysine occurs at positions 201 and 279. A Glycyl lysine isopeptide (Lys-Gly) (interchain with G-Cter in SUMO2) cross-link involves residue K325. One can recognise an MYST-type HAT domain in the interval 334–609; the sequence is EGSNMIKTIA…MDPSCLKWTP (276 aa). A Glycyl lysine isopeptide (Lys-Gly) (interchain with G-Cter in ubiquitin) cross-link involves residue K340. The segment at 367-392 adopts a C2HC MYST-type zinc-finger fold; that stretch reads LYMCEFCLKYMKSQTILRRHMAKCVW. Residues C370, C373, H386, and C390 each coordinate Zn(2+). Position 434 is an N6-acetyllysine; by autocatalysis (K434). Residues 477-479 and 485-490 contribute to the acetyl-CoA site; these read ILT and RQGYGK. S508 carries the phosphoserine modification. Catalysis depends on E510, which acts as the Proton donor/acceptor. Positions 514 and 523 each coordinate acetyl-CoA.

The protein belongs to the MYST (SAS/MOZ) family. In terms of assembly, component of the HBO1 complex composed of KAT7/HBO1, MEAF6, ING4 or ING5, and one scaffold subunit: complexes containing BRPF scaffold (BRPF1, BRD1/BRPF2 or BRPF3) direct KAT7/HBO1 specificity towards H3K14ac, while complexes containing JADE scaffold (JADE1, JADE2 and JADE3) mediate acetylation of histone H4. Interacts with MCM2 and ORC1. Interacts with the androgen receptor (AR) in the presence of dihydrotestosterone. Interacts with CDT1. Interacts with MAP2K1 and CUL1. Interacts with p53/TP53; leading to inhibit histone acetyltransferase activity. Phosphorylated at Ser-52 and Ser-55 by ATR in response to DNA damage, promoting its ubiquitination by the CRL4(DDB2) complex and subsequent degradation. Phosphorylation at Ser-52 and Ser-55 by ATR in response to ultraviolet-induced DNA, promotes localization to DNA damage sites. Phosphorylation at Ser-59 by PLK1 during mitosis seems important for prereplicative complex formation and DNA replication licensing, and requires prior phosphorylation at Thr-87 and Thr-90 by CDK1. Phosphorylated by MAP2K1, which accelerates its degradation. In terms of processing, ubiquitinated at Lys-340, leading to proteasomal degradation. Ubiquitinated by the CRL4(DDB2) complex following phosphorylation by ATR, leading to its subsequent degradation. Post-translationally, autoacetylation at Lys-434 is required for proper function. In terms of tissue distribution, widely expressed in adult tissues.

It is found in the nucleus. It localises to the chromosome. The protein localises to the centromere. The protein resides in the cytoplasm. Its subcellular location is the cytosol. It catalyses the reaction L-lysyl-[protein] + acetyl-CoA = N(6)-acetyl-L-lysyl-[protein] + CoA + H(+). Its activity is regulated as follows. Histone acetyltransferase activity is inhibited by GMNN in the context of a complex with CDT1, inhibiting histone H4 acetylation and DNA replication licensing. Its function is as follows. Catalytic subunit of histone acetyltransferase HBO1 complexes, which specifically mediate acetylation of histone H3 at 'Lys-14' (H3K14ac), thereby regulating various processes, such as gene transcription, protein ubiquitination, immune regulation, stem cell pluripotent and self-renewal maintenance and embryonic development. Some complexes also catalyze acetylation of histone H4 at 'Lys-5', 'Lys-8' and 'Lys-12' (H4K5ac, H4K8ac and H4K12ac, respectively), regulating DNA replication initiation, regulating DNA replication initiation. Specificity of the HBO1 complexes is determined by the scaffold subunit: complexes containing BRPF scaffold (BRPF1, BRD1/BRPF2 or BRPF3) direct KAT7/HBO1 specificity towards H3K14ac, while complexes containing JADE (JADE1, JADE2 and JADE3) scaffold direct KAT7/HBO1 specificity towards histone H4. H3K14ac promotes transcriptional elongation by facilitating the processivity of RNA polymerase II. Acts as a key regulator of hematopoiesis by forming a complex with BRD1/BRPF2, directing KAT7/HBO1 specificity towards H3K14ac and promoting erythroid differentiation. H3K14ac is also required for T-cell development. KAT7/HBO1-mediated acetylation facilitates two consecutive steps, licensing and activation, in DNA replication initiation: H3K14ac facilitates the activation of replication origins, and histone H4 acetylation (H4K5ac, H4K8ac and H4K12ac) facilitates chromatin loading of MCM complexes, promoting DNA replication licensing. Acts as a positive regulator of centromeric CENPA assembly: recruited to centromeres and mediates histone acetylation, thereby preventing centromere inactivation mediated by SUV39H1, possibly by increasing histone turnover/exchange. Involved in nucleotide excision repair: phosphorylation by ATR in response to ultraviolet irradiation promotes its localization to DNA damage sites, where it mediates histone acetylation to facilitate recruitment of XPC at the damaged DNA sites. Acts as an inhibitor of NF-kappa-B independently of its histone acetyltransferase activity. Plays a central role in the maintenance of leukemia stem cells in acute myeloid leukemia (AML). Acts by mediating acetylation of histone H3 at 'Lys-14' (H3K14ac), thereby facilitating the processivity of RNA polymerase II to maintain the high expression of key genes, such as HOXA9 and HOXA10 that help to sustain the functional properties of leukemia stem cells. This Mus musculus (Mouse) protein is Histone acetyltransferase KAT7.